Reading from the N-terminus, the 1103-residue chain is Ubiquitin carboxyl-terminal hydrolase 7 (1103 aa).

Positions 1–11 (MNHQQQQQQQQ) are enriched in low complexity. The disordered stretch occupies residues 1–40 (MNHQQQQQQQQKAGEQQLSEPEDMEMEAGDTDDPPRITQN). Residues 1–209 (MNHQQQQQQQ…APHGVAWDSK (209 aa)) are interaction with TSPYL5. S19 bears the Phosphoserine mark. A compositionally biased stretch (acidic residues) spans 20-32 (EPEDMEMEAGDTD). Phosphoserine is present on residues S50 and S54. Positions 54 to 209 (SNAEEDMEDD…APHGVAWDSK (156 aa)) are interaction with p53/TP53 and MDM2. An MATH domain is found at 69 to 196 (EATFQFTVER…DDKVTFEVFV (128 aa)). The necessary for nuclear localization stretch occupies residues 71–206 (TFQFTVERFS…QADAPHGVAW (136 aa)). Residues 215–522 (VGLKNQGATC…NAYMLVYIRE (308 aa)) form the USP domain. The active-site Nucleophile is the C224. H465 acts as the Proton acceptor in catalysis. N6-acetyllysine; alternate is present on K870. K870 is covalently cross-linked (Glycyl lysine isopeptide (Lys-Gly) (interchain with G-Cter in SUMO2); alternate). Residue K870 forms a Glycyl lysine isopeptide (Lys-Gly) (interchain with G-Cter in ubiquitin); alternate linkage. K883 is covalently cross-linked (Glycyl lysine isopeptide (Lys-Gly) (interchain with G-Cter in SUMO2)). Phosphoserine is present on S964. N6-acetyllysine occurs at positions 1085 and 1097.

The protein belongs to the peptidase C19 family. Monomer. Homodimer. Part of a complex with DAXX, MDM2, RASSF1 and USP7. Part of a complex with DAXX, MDM2 and USP7. Interacts with MDM2; the interaction is independent of p53/TP53. Interacts with DAXX; the interaction is direct and independent of MDM2 and p53/TP53. Component of a complex composed of KMT2E, OGT and USP7; the complex stabilizes KMT2E, preventing KMT2E ubiquitination and proteasomal-mediated degradation. Interacts (via MATH domain) with KMT2E. Interacts with OGT. Interacts with FOXO4; the interaction is enhanced in presence of hydrogen peroxide and occurs independently of p53/TP53. Interacts with p53/TP53; the interaction is enhanced in response to DNA damage; the interaction is impaired by TSPYL5. Interacts with PTEN; the interaction is direct. Interacts with ATXN1 and the strength of interaction is influenced by the length of the poly-Gln region in ATXN1. A weaker interaction seen with mutants having longer poly-Gln regions. Interacts with KIAA1530/UVSSA. Interacts with MEX3C and antagonizes its ability to degrade mRNA. Interacts with DNMT1 and UHRF1. Interacts with FOXP3. Interacts (via MATH domain) with RNF220. Associated component of the Polycomb group (PcG) multiprotein PRC1-like complex. Interacts with EPOP. Interacts with OTUD4 and USP9X; the interaction is direct. Interacts with CRY2. Interacts with REST. Interacts with ERCC6. Part of a complex consisting of USP7, MAGEL2 and TRIM27; directly interacts with MAGEL2; directly interacts with TRIM27. Post-translationally, polyneddylated. Not sumoylated. In terms of processing, ubiquitinated at Lys-870. Polyubiquitinated. In terms of tissue distribution, strongly expressed in the testis, spleen and brain. Weakly expressed in the stomach, small intestine, skeletal muscle and uterus.

The protein resides in the nucleus. Its subcellular location is the cytoplasm. It localises to the PML body. It is found in the chromosome. It carries out the reaction Thiol-dependent hydrolysis of ester, thioester, amide, peptide and isopeptide bonds formed by the C-terminal Gly of ubiquitin (a 76-residue protein attached to proteins as an intracellular targeting signal).. Hydrolase that deubiquitinates target proteins such as ARMC5, FOXO4, DEPTOR, KAT5, p53/TP53, MDM2, ERCC6, DNMT1, UHRF1, PTEN, KMT2E/MLL5 and DAXX. Together with DAXX, prevents MDM2 self-ubiquitination and enhances the E3 ligase activity of MDM2 towards p53/TP53, thereby promoting p53/TP53 ubiquitination and proteasomal degradation. Deubiquitinates p53/TP53, preventing degradation of p53/TP53, and enhances p53/TP53-dependent transcription regulation, cell growth repression and apoptosis. Deubiquitinates p53/TP53 and MDM2 and strongly stabilizes p53/TP53 even in the presence of excess MDM2, and also induces p53/TP53-dependent cell growth repression and apoptosis. Deubiquitination of FOXO4 in presence of hydrogen peroxide is not dependent on p53/TP53 and inhibits FOXO4-induced transcriptional activity. In association with DAXX, is involved in the deubiquitination and translocation of PTEN from the nucleus to the cytoplasm, both processes that are counteracted by PML. Deubiquitinates KMT2E preventing KMT2E proteasomal-mediated degradation. Involved in cell proliferation during early embryonic development. Involved in transcription-coupled nucleotide excision repair (TC-NER) in response to UV damage: recruited to DNA damage sites following interaction with KIAA1530/UVSSA and promotes deubiquitination of ERCC6, preventing UV-induced degradation of ERCC6. Involved in maintenance of DNA methylation via its interaction with UHRF1 and DNMT1: acts by mediating deubiquitination of UHRF1 and DNMT1, preventing their degradation and promoting DNA methylation by DNMT1. Deubiquitinates alkylation repair enzyme ALKBH3. OTUD4 recruits USP7 and USP9X to stabilize ALKBH3, thereby promoting the repair of alkylated DNA lesions. Acts as a chromatin regulator via its association with the Polycomb group (PcG) multiprotein PRC1-like complex; may act by deubiquitinating components of the PRC1-like complex. Able to mediate deubiquitination of histone H2B; it is however unsure whether this activity takes place in vivo. Exhibits a preference towards 'Lys-48'-linked ubiquitin chains. Increases regulatory T-cells (Treg) suppressive capacity by deubiquitinating and stabilizing transcription factor FOXP3 which is crucial for Treg cell function. Plays a role in the maintenance of the circadian clock periodicity via deubiquitination and stabilization of the CRY1 and CRY2 proteins. Deubiquitinates REST, thereby stabilizing REST and promoting the maintenance of neural progenitor cells. Deubiquitinates SIRT7, inhibiting SIRT7 histone deacetylase activity and regulating gluconeogenesis. Involved in the regulation of WASH-dependent actin polymerization at the surface of endosomes and the regulation of endosomal protein recycling. It maintains optimal WASH complex activity and precise F-actin levels via deubiquitination of TRIM27 and WASHC1. Mediates the deubiquitination of phosphorylated DEPTOR, promoting its stability and leading to decreased mTORC1 signaling. This is Ubiquitin carboxyl-terminal hydrolase 7 (Usp7) from Rattus norvegicus (Rat).